We begin with the raw amino-acid sequence, 634 residues long: Chaperone protein DnaK (634 aa).

Phosphothreonine; by autocatalysis is present on Thr198. A disordered region spans residues 599-634 (KQTQEGAEAASEAGEQSAGDEGVVDAEFEEVDEQNK). The segment covering 602-619 (QEGAEAASEAGEQSAGDE) has biased composition (low complexity). Residues 620-634 (GVVDAEFEEVDEQNK) are compositionally biased toward acidic residues.

It belongs to the heat shock protein 70 family.

Functionally, acts as a chaperone. The protein is Chaperone protein DnaK of Syntrophotalea carbinolica (strain DSM 2380 / NBRC 103641 / GraBd1) (Pelobacter carbinolicus).